Consider the following 147-residue polypeptide: Large ribosomal subunit protein uL15 (147 aa).

Basic and acidic residues predominate over residues 1 to 15; sequence MKLHELKPAKGAVKE. Residues 1-47 are disordered; that stretch reads MKLHELKPAKGAVKEVKRKGRGRATGNGKTAGRGHNGQNSRSGGGVR. The span at 23-35 shows a compositional bias: gly residues; it reads RATGNGKTAGRGH.

This sequence belongs to the universal ribosomal protein uL15 family. As to quaternary structure, part of the 50S ribosomal subunit.

Binds to the 23S rRNA. In Alkaliphilus metalliredigens (strain QYMF), this protein is Large ribosomal subunit protein uL15.